Consider the following 272-residue polypeptide: Indole-3-glycerol phosphate synthase (272 aa).

This sequence belongs to the TrpC family.

The catalysed reaction is 1-(2-carboxyphenylamino)-1-deoxy-D-ribulose 5-phosphate + H(+) = (1S,2R)-1-C-(indol-3-yl)glycerol 3-phosphate + CO2 + H2O. Its pathway is amino-acid biosynthesis; L-tryptophan biosynthesis; L-tryptophan from chorismate: step 4/5. This chain is Indole-3-glycerol phosphate synthase, found in Mycolicibacterium paratuberculosis (strain ATCC BAA-968 / K-10) (Mycobacterium paratuberculosis).